The primary structure comprises 346 residues: Phosphate acyltransferase (346 aa).

Belongs to the PlsX family. In terms of assembly, homodimer. Probably interacts with PlsY.

Its subcellular location is the cytoplasm. It catalyses the reaction a fatty acyl-[ACP] + phosphate = an acyl phosphate + holo-[ACP]. It functions in the pathway lipid metabolism; phospholipid metabolism. In terms of biological role, catalyzes the reversible formation of acyl-phosphate (acyl-PO(4)) from acyl-[acyl-carrier-protein] (acyl-ACP). This enzyme utilizes acyl-ACP as fatty acyl donor, but not acyl-CoA. The protein is Phosphate acyltransferase of Crocosphaera subtropica (strain ATCC 51142 / BH68) (Cyanothece sp. (strain ATCC 51142)).